A 323-amino-acid chain; its full sequence is Prostaglandin F synthase 2 (323 aa).

Residues 20 to 24 (GFGTY) and aspartate 50 contribute to the NADP(+) site. Tyrosine 55 serves as the catalytic Proton donor. Residue histidine 117 participates in substrate binding. NADP(+) is bound by residues 166-167 (SN), glutamine 190, 216-221 (YAALGA), and 270-280 (KSFNKKRIKEN).

This sequence belongs to the aldo/keto reductase family. Monomer.

The protein localises to the cytoplasm. The catalysed reaction is prostaglandin F2alpha + NADP(+) = prostaglandin D2 + NADPH + H(+). Its pathway is lipid metabolism; prostaglandin biosynthesis. Catalyzes the reduction of PGD(2) and PGH(2) to PGF(2 alpha) and a stereoisomer, respectively. It has a broad substrate specificity and also reduces other carbonyl compounds. The sequence is that of Prostaglandin F synthase 2 from Bos taurus (Bovine).